Here is a 294-residue protein sequence, read N- to C-terminus: Gap junction delta-3 protein (294 aa).

At 1-24 (MGEWAFLGSLLDAVQLQSPLVGRL) the chain is on the cytoplasmic side. A helical membrane pass occupies residues 25 to 45 (WLVVMLIFRILVLATVGGAVF). Residues 46–76 (EDEQEEFVCNTLQPGCRQTCYDRAFPVSHYR) are Extracellular-facing. The chain crosses the membrane as a helical span at residues 77 to 97 (FWLFHILLLSAPPVLFVVYSM). The Cytoplasmic segment spans residues 98 to 136 (HRAGKEAGGAEAAAQCAPGLPEAQCAPCALRARRARRCY). A helical transmembrane segment spans residues 137–157 (LLSVALRLLAELTFLGGQALL). Residues 158–188 (YGFRVAPHFACAGPPCPHTVDCFVSRPTEKT) lie on the Extracellular side of the membrane. Residues 189 to 209 (VFVLFYFAVGLLSALLSVAEL) traverse the membrane as a helical segment. The Cytoplasmic portion of the chain corresponds to 210 to 294 (GHLLWKGRPR…PATGRRDLAI (85 aa)). The disordered stretch occupies residues 233-294 (EAQKLLPPPP…PATGRRDLAI (62 aa)). Over residues 238–250 (LPPPPPPPPPPAL) the composition is skewed to pro residues.

This sequence belongs to the connexin family. Delta-type subfamily. As to quaternary structure, a connexon is composed of a hexamer of connexins. Interacts with TJP1. Expressed in vascular smooth muscle cells. Found in heart, colon, and artery (at protein level). Found in cerebral cortex, heart, liver, lung, kidney, spleen and testis.

It is found in the cell membrane. The protein resides in the cell junction. The protein localises to the gap junction. Functionally, one gap junction consists of a cluster of closely packed pairs of transmembrane channels, the connexons, through which materials of low MW diffuse from one cell to a neighboring cell. The chain is Gap junction delta-3 protein (GJD3) from Homo sapiens (Human).